The chain runs to 44 residues: Protein non-structural 7b (44 aa).

Residues 9 to 29 (FYLCFLAFLLFLVLIMLIIFW) traverse the membrane as a helical segment.

The protein localises to the host membrane. The polypeptide is Protein non-structural 7b (Homo sapiens (Human)).